We begin with the raw amino-acid sequence, 182 residues long: NAD(P)H-quinone oxidoreductase subunit I, chloroplastic (182 aa).

4Fe-4S ferredoxin-type domains lie at 55-84 and 95-124; these read GRIHFEFDKCIACEVCVRVCPIDLPVVDWK and LNYSIDFGICIFCGNCVEYCPTNCLSMTEE. 8 residues coordinate [4Fe-4S] cluster: C64, C67, C70, C74, C104, C107, C110, and C114.

This sequence belongs to the complex I 23 kDa subunit family. NDH is composed of at least 16 different subunits, 5 of which are encoded in the nucleus. It depends on [4Fe-4S] cluster as a cofactor.

It localises to the plastid. The protein resides in the chloroplast thylakoid membrane. It carries out the reaction a plastoquinone + NADH + (n+1) H(+)(in) = a plastoquinol + NAD(+) + n H(+)(out). The catalysed reaction is a plastoquinone + NADPH + (n+1) H(+)(in) = a plastoquinol + NADP(+) + n H(+)(out). NDH shuttles electrons from NAD(P)H:plastoquinone, via FMN and iron-sulfur (Fe-S) centers, to quinones in the photosynthetic chain and possibly in a chloroplast respiratory chain. The immediate electron acceptor for the enzyme in this species is believed to be plastoquinone. Couples the redox reaction to proton translocation, and thus conserves the redox energy in a proton gradient. This chain is NAD(P)H-quinone oxidoreductase subunit I, chloroplastic, found in Buxus microphylla (Littleleaf boxwood).